Here is a 186-residue protein sequence, read N- to C-terminus: ATP synthase subunit delta, chloroplastic (186 aa).

It belongs to the ATPase delta chain family. In terms of assembly, F-type ATPases have 2 components, F(1) - the catalytic core - and F(0) - the membrane proton channel. F(1) has five subunits: alpha(3), beta(3), gamma(1), delta(1), epsilon(1). CF(0) has four main subunits: a(1), b(1), b'(1) and c(10-14). The alpha and beta chains form an alternating ring which encloses part of the gamma chain. F(1) is attached to F(0) by a central stalk formed by the gamma and epsilon chains, while a peripheral stalk is formed by the delta, b and b' chains.

The protein localises to the plastid. It localises to the chloroplast thylakoid membrane. In terms of biological role, f(1)F(0) ATP synthase produces ATP from ADP in the presence of a proton or sodium gradient. F-type ATPases consist of two structural domains, F(1) containing the extramembraneous catalytic core and F(0) containing the membrane proton channel, linked together by a central stalk and a peripheral stalk. During catalysis, ATP synthesis in the catalytic domain of F(1) is coupled via a rotary mechanism of the central stalk subunits to proton translocation. Functionally, this protein is part of the stalk that links CF(0) to CF(1). It either transmits conformational changes from CF(0) to CF(1) or is implicated in proton conduction. This is ATP synthase subunit delta, chloroplastic from Pyropia yezoensis (Susabi-nori).